Here is a 60-residue protein sequence, read N- to C-terminus: Mannitol-specific phosphotransferase enzyme IIA component (60 aa).

The 59-residue stretch at 2–60 (SELFSNDNIFLNVNVNSQNEAIEKAGKALVDSGAVTDAYIQVVSTFMGNGLAIPHGTDD) folds into the PTS EIIA type-2 domain. The active-site Tele-phosphohistidine intermediate is histidine 56. Position 56 is a phosphohistidine; by HPr (histidine 56).

As to quaternary structure, homodimer or homotrimer. Seems to be a monomer when not phosphorylated.

The protein resides in the cytoplasm. Its function is as follows. The phosphoenolpyruvate-dependent sugar phosphotransferase system (sugar PTS), a major carbohydrate active transport system, catalyzes the phosphorylation of incoming sugar substrates concomitantly with their translocation across the cell membrane. The enzyme II CmtAB PTS system is involved in D-mannitol transport. The chain is Mannitol-specific phosphotransferase enzyme IIA component from Staphylococcus aureus.